Here is a 131-residue protein sequence, read N- to C-terminus: Ribosome-binding factor A (131 aa).

Belongs to the RbfA family. In terms of assembly, monomer. Binds 30S ribosomal subunits, but not 50S ribosomal subunits or 70S ribosomes.

Its subcellular location is the cytoplasm. One of several proteins that assist in the late maturation steps of the functional core of the 30S ribosomal subunit. Associates with free 30S ribosomal subunits (but not with 30S subunits that are part of 70S ribosomes or polysomes). Required for efficient processing of 16S rRNA. May interact with the 5'-terminal helix region of 16S rRNA. In Ruegeria pomeroyi (strain ATCC 700808 / DSM 15171 / DSS-3) (Silicibacter pomeroyi), this protein is Ribosome-binding factor A.